The following is a 132-amino-acid chain: Translation initiation factor 5A (132 aa).

The residue at position 37 (Lys-37) is a Hypusine.

This sequence belongs to the eIF-5A family.

It is found in the cytoplasm. Functionally, functions by promoting the formation of the first peptide bond. The sequence is that of Translation initiation factor 5A (eif5a) from Methanocaldococcus jannaschii (strain ATCC 43067 / DSM 2661 / JAL-1 / JCM 10045 / NBRC 100440) (Methanococcus jannaschii).